The following is a 201-amino-acid chain: Sterile alpha motif domain-containing protein 12 (201 aa).

One can recognise an SAM domain in the interval 77–143 (WTQQDVCKWL…LQQVLQLKVR (67 aa)).

In terms of tissue distribution, expressed in the brain.

In Homo sapiens (Human), this protein is Sterile alpha motif domain-containing protein 12 (SAMD12).